Consider the following 210-residue polypeptide: Orotate phosphoribosyltransferase (210 aa).

5-phospho-alpha-D-ribose 1-diphosphate-binding positions include arginine 94, lysine 98, histidine 100, and 120–128; that span reads EDLISTGGS. Residue serine 124 participates in orotate binding.

This sequence belongs to the purine/pyrimidine phosphoribosyltransferase family. PyrE subfamily. Homodimer. The cofactor is Mg(2+).

The catalysed reaction is orotidine 5'-phosphate + diphosphate = orotate + 5-phospho-alpha-D-ribose 1-diphosphate. Its pathway is pyrimidine metabolism; UMP biosynthesis via de novo pathway; UMP from orotate: step 1/2. In terms of biological role, catalyzes the transfer of a ribosyl phosphate group from 5-phosphoribose 1-diphosphate to orotate, leading to the formation of orotidine monophosphate (OMP). The chain is Orotate phosphoribosyltransferase from Bacillus cytotoxicus (strain DSM 22905 / CIP 110041 / 391-98 / NVH 391-98).